The sequence spans 26 residues: Dermaseptin-B5 (26 aa).

Val-26 carries the post-translational modification Valine amide.

The protein belongs to the frog skin active peptide (FSAP) family. Dermaseptin subfamily. As to expression, expressed by the skin glands.

Its subcellular location is the secreted. Possesses a potent antimicrobial activity against Gram-positive and Gram-negative bacteria. Probably acts by disturbing membrane functions with its amphipathic structure. The polypeptide is Dermaseptin-B5 (Phyllomedusa bicolor (Two-colored leaf frog)).